Reading from the N-terminus, the 67-residue chain is Protein AaeX (67 aa).

2 consecutive transmembrane segments (helical) span residues 3 to 23 (LFPVIVVFGLSFPPIFFELLL) and 47 to 67 (PALFNTALYCCLFYLISRLFV).

It belongs to the AaeX family.

It localises to the cell membrane. This Escherichia coli O157:H7 protein is Protein AaeX.